We begin with the raw amino-acid sequence, 387 residues long: Galactokinase (387 aa).

Glutamate 33 to aspartate 36 lines the substrate pocket. ATP-binding positions include serine 67 and glycine 124 to serine 130. Mg(2+)-binding residues include serine 130 and glutamate 162. The active-site Proton acceptor is aspartate 174. Residue tyrosine 224 participates in substrate binding.

The protein belongs to the GHMP kinase family. GalK subfamily.

It is found in the cytoplasm. It carries out the reaction alpha-D-galactose + ATP = alpha-D-galactose 1-phosphate + ADP + H(+). The protein operates within carbohydrate metabolism; galactose metabolism. Functionally, catalyzes the transfer of the gamma-phosphate of ATP to D-galactose to form alpha-D-galactose-1-phosphate (Gal-1-P). This chain is Galactokinase, found in Clostridium perfringens (strain 13 / Type A).